Reading from the N-terminus, the 338-residue chain is 1-aminocyclopropane-1-carboxylate deaminase (338 aa).

The residue at position 51 (Lys51) is an N6-(pyridoxal phosphate)lysine. Ser78 (nucleophile) is an active-site residue.

This sequence belongs to the ACC deaminase/D-cysteine desulfhydrase family. Requires pyridoxal 5'-phosphate as cofactor.

The enzyme catalyses 1-aminocyclopropane-1-carboxylate + H2O = 2-oxobutanoate + NH4(+). Catalyzes a cyclopropane ring-opening reaction, the irreversible conversion of 1-aminocyclopropane-1-carboxylate (ACC) to ammonia and alpha-ketobutyrate. Allows growth on ACC as a nitrogen source. The chain is 1-aminocyclopropane-1-carboxylate deaminase from Enterobacter cloacae.